The primary structure comprises 362 residues: Divinyl chlorophyll a/b light-harvesting protein PcbF (362 aa).

The next 6 membrane-spanning stretches (helical) occupy residues 27-47 (FIGS…ANTL), 89-109 (IAFI…AGLL), 150-170 (FILG…VEWA), 211-231 (VMGG…FHIA), 251-271 (AVLS…AFWC), and 316-336 (LANV…WHAI).

The protein belongs to the PsbB/PsbC family. IsiA/Pcb subfamily. As to quaternary structure, the antenna complex consists of divinyl chlorophylls (a and b) and divinyl chlorophyll a/b binding proteins and binds more divinyl chlorophyll b than does the antenna complex from high-light-adapted Prochlorococcus. Divinyl chlorophyll a serves as cofactor. Requires divinyl chlorophyll b as cofactor.

It is found in the cellular thylakoid membrane. The antenna complex functions as a light receptor, it captures and delivers excitation energy to photosystems II and I. The Prochlorales pcb genes are not related to higher plant LHCs. The protein is Divinyl chlorophyll a/b light-harvesting protein PcbF (pcbF) of Prochlorococcus marinus (strain NATL2A).